The primary structure comprises 338 residues: mRNA decay activator protein ZFP36L1 (338 aa).

The segment at 1–111 (MTTTLVSATI…QKQPGGGQVN (111 aa)) is necessary and sufficient for the association with mRNA decay enzymes and mRNA decay activation. Position 54 is a phosphoserine; by MAPKAPK2 (Ser54). The residue at position 90 (Ser90) is a Phosphoserine; by PKB/AKT1. A Phosphoserine; by PKB/AKT1 and MAPKAPK2 modification is found at Ser92. Residues 93 to 113 (EGGERLLPTQKQPGGGQVNSS) are disordered. 2 consecutive C3H1-type zinc fingers follow at residues 114 to 142 (RYKT…HGIH) and 152 to 180 (KYKT…HNAE). Residues 185 to 338 (LAGARDLSAD…IFSRLSISDD (154 aa)) are necessary for mRNA decay activation. Ser203 carries the post-translational modification Phosphoserine; by PKB/AKT1 and MAPKAPK2. The interval 273–338 (SPTTFLFRPM…IFSRLSISDD (66 aa)) is disordered. Residues 296 to 318 (QDSLSDQEGYLSSSSSSHSGSDS) are compositionally biased toward low complexity. A Phosphoserine modification is found at Ser318. Ser334 bears the Phosphoserine; by RPS6KA1 mark.

In terms of assembly, associates with the cytoplasmic CCR4-NOT deadenylase and RNA exosome complexes to trigger ARE-containing mRNA deadenylation and decay processes. Interacts with CNOT1. Interacts (via N-terminus) with CNOT6. Interacts with CNOT7; this interaction is inhibited in response to phorbol 12-myristate 13-acetate (PMA) treatment in a p38 MAPK-dependent manner. Interacts with DCP1A. Interacts (via N-terminus) with DCP2. Interacts (via N-terminus) with EXOSC2. Interacts with XRN1. Interacts (via phosphorylated form) with YWHAB; this interaction occurs in a protein kinase AKT1-dependent manner. Interacts (via phosphorylated form) with YWHAZ; this interaction occurs in a p38 MAPK- and AKT-signaling pathways. Phosphorylated. Phosphorylated by RPS6KA1 at Ser-334 upon phorbol 12-myristate 13-acetate (PMA) treatment; this phosphorylation results in dissociation of the CCR4-NOT deadenylase complex and induces p38 MAPK-mediated stabilization of the low-density lipoprotein receptor LDLR mRNA. Phosphorylated by protein kinase AKT1 at Ser-92 and Ser-203 in response to insulin; these phosphorylations stabilize ZFP36L1, increase the association with 14-3-3 proteins and mediate ARE-containing mRNA stabilization. AKT1-mediated phosphorylation at Ser-92 does not impair ARE-containing RNA-binding. Phosphorylated at Ser-54, Ser-92 and Ser-203 by MAPKAPK2; these phosphorylations increase the association with 14-3-3 proteins and mediate ARE-containing mRNA stabilization in a protein kinase AKT1-independent manner. MAPKAPK2-mediated phosphorylations at Ser-54, Ser-92 and Ser-203 do not impair ARE-containing RNA-binding. Phosphorylations increase the association with 14-3-3 proteins and mediate ARE-containing mRNA stabilization during early adipogenesis in a p38 MAPK- and AKT-dependent manner. In terms of processing, ubiquitinated. Ubiquitination leads to proteasomal degradation, a process inhibited by phosphorylations at Ser-90, Ser-92 and Ser-203. As to expression, expressed mainly in the basal epidermal layer, weakly in the suprabasal epidermal layers. Expressed in epidermal keratinocytes (at protein level). Expressed in osteoblasts.

The protein localises to the nucleus. It localises to the cytoplasm. The protein resides in the cytoplasmic granule. It is found in the P-body. Functionally, zinc-finger RNA-binding protein that destabilizes several cytoplasmic AU-rich element (ARE)-containing mRNA transcripts by promoting their poly(A) tail removal or deadenylation, and hence provide a mechanism for attenuating protein synthesis. Acts as a 3'-untranslated region (UTR) ARE mRNA-binding adapter protein to communicate signaling events to the mRNA decay machinery. Functions by recruiting the CCR4-NOT deadenylase complex and components of the cytoplasmic RNA decay machinery to the bound ARE-containing mRNAs, and hence promotes ARE-mediated mRNA deadenylation and decay processes. Also induces the degradation of ARE-containing mRNAs even in absence of poly(A) tail. Binds to 3'-UTR ARE of numerous mRNAs. Positively regulates early adipogenesis by promoting ARE-mediated mRNA decay of immediate early genes (IEGs). Promotes ARE-mediated mRNA decay of mineralocorticoid receptor NR3C2 mRNA in response to hypertonic stress. Negatively regulates hematopoietic/erythroid cell differentiation by promoting ARE-mediated mRNA decay of the transcription factor STAT5B mRNA. Positively regulates monocyte/macrophage cell differentiation by promoting ARE-mediated mRNA decay of the cyclin-dependent kinase CDK6 mRNA. Promotes degradation of ARE-containing pluripotency-associated mRNAs in embryonic stem cells (ESCs), such as NANOG, through a fibroblast growth factor (FGF)-induced MAPK-dependent signaling pathway, and hence attenuates ESC self-renewal and positively regulates mesendoderm differentiation. May play a role in mediating pro-apoptotic effects in malignant B-cells by promoting ARE-mediated mRNA decay of BCL2 mRNA. In association with ZFP36L2 maintains quiescence on developing B lymphocytes by promoting ARE-mediated decay of several mRNAs encoding cell cycle regulators that help B cells progress through the cell cycle, and hence ensuring accurate variable-diversity-joining (VDJ) recombination and functional immune cell formation. Together with ZFP36L2 is also necessary for thymocyte development and prevention of T-cell acute lymphoblastic leukemia (T-ALL) transformation by promoting ARE-mediated mRNA decay of the oncogenic transcription factor NOTCH1 mRNA. Participates in the delivery of target ARE-mRNAs to processing bodies (PBs). In addition to its cytosolic mRNA-decay function, plays a role in the regulation of nuclear mRNA 3'-end processing; modulates mRNA 3'-end maturation efficiency of the DLL4 mRNA through binding with an ARE embedded in a weak noncanonical polyadenylation (poly(A)) signal in endothelial cells. Also involved in the regulation of stress granule (SG) and P-body (PB) formation and fusion. Plays a role in vasculogenesis and endocardial development. Plays a role in the regulation of keratinocyte proliferation, differentiation and apoptosis. Plays a role in myoblast cell differentiation. This Homo sapiens (Human) protein is mRNA decay activator protein ZFP36L1.